The sequence spans 161 residues: Eukaryotic translation initiation factor 5A-1 (161 aa).

Positions 1–12 (MSDEEHQFESKA) are enriched in basic and acidic residues. The tract at residues 1–21 (MSDEEHQFESKADAGASKTYP) is disordered. Residue Lys-52 is modified to Hypusine.

Belongs to the eIF-5A family. Lys-52 undergoes hypusination, a unique post-translational modification that consists in the addition of a butylamino group from spermidine to lysine side chain, leading to the formation of the unusual amino acid hypusine. eIF-5As are the only known proteins to undergo this modification, which is essential for their function.

Translation factor that promotes translation elongation and termination, particularly upon ribosome stalling at specific amino acid sequence contexts. Binds between the exit (E) and peptidyl (P) site of the ribosome and promotes rescue of stalled ribosome: specifically required for efficient translation of polyproline-containing peptides as well as other motifs that stall the ribosome. Acts as a ribosome quality control (RQC) cofactor by joining the RQC complex to facilitate peptidyl transfer during CAT tailing step. The polypeptide is Eukaryotic translation initiation factor 5A-1 (Medicago sativa (Alfalfa)).